Consider the following 388-residue polypeptide: Chorismate synthase (388 aa).

Residues arginine 39 and arginine 45 each coordinate NADP(+). FMN-binding positions include 130-132 (RSS), 251-252 (NA), glycine 296, 311-315 (KPIPT), and arginine 337.

Belongs to the chorismate synthase family. In terms of assembly, homotetramer. FMNH2 is required as a cofactor.

The enzyme catalyses 5-O-(1-carboxyvinyl)-3-phosphoshikimate = chorismate + phosphate. Its pathway is metabolic intermediate biosynthesis; chorismate biosynthesis; chorismate from D-erythrose 4-phosphate and phosphoenolpyruvate: step 7/7. Functionally, catalyzes the anti-1,4-elimination of the C-3 phosphate and the C-6 proR hydrogen from 5-enolpyruvylshikimate-3-phosphate (EPSP) to yield chorismate, which is the branch point compound that serves as the starting substrate for the three terminal pathways of aromatic amino acid biosynthesis. This reaction introduces a second double bond into the aromatic ring system. The polypeptide is Chorismate synthase (Streptococcus pyogenes serotype M28 (strain MGAS6180)).